Reading from the N-terminus, the 29-residue chain is Brevinin-2Ee (29 aa).

Residues Cys23 and Cys29 are joined by a disulfide bond.

It belongs to the frog skin active peptide (FSAP) family. Brevinin subfamily. Expressed by the skin glands.

The protein localises to the secreted. In terms of biological role, shows antibacterial activity against representative Gram-negative and Gram-positive bacterial species, and hemolytic activity. This Pelophylax lessonae (Pool frog) protein is Brevinin-2Ee.